Reading from the N-terminus, the 341-residue chain is Phosphoribosylformylglycinamidine cyclo-ligase (341 aa).

Belongs to the AIR synthase family.

The protein resides in the cytoplasm. It catalyses the reaction 2-formamido-N(1)-(5-O-phospho-beta-D-ribosyl)acetamidine + ATP = 5-amino-1-(5-phospho-beta-D-ribosyl)imidazole + ADP + phosphate + H(+). It functions in the pathway purine metabolism; IMP biosynthesis via de novo pathway; 5-amino-1-(5-phospho-D-ribosyl)imidazole from N(2)-formyl-N(1)-(5-phospho-D-ribosyl)glycinamide: step 2/2. This is Phosphoribosylformylglycinamidine cyclo-ligase from Lachnospira eligens (strain ATCC 27750 / DSM 3376 / VPI C15-48 / C15-B4) (Eubacterium eligens).